Here is an 855-residue protein sequence, read N- to C-terminus: Envelope glycoprotein gp160 (855 aa).

An N-terminal signal peptide occupies residues 1–31 (MRAREIERNCPNLWKWGIMLLGILMICSAAD). The Extracellular segment spans residues 32–683 (NLWVTVYYGV…ITQWLWYIKI (652 aa)). Cysteine 53 and cysteine 73 are disulfide-bonded. Asparagine 87, asparagine 129, asparagine 140, asparagine 145, asparagine 154, asparagine 158, asparagine 186, asparagine 189, asparagine 199, asparagine 236, asparagine 243, asparagine 264, asparagine 278, asparagine 291, and asparagine 297 each carry an N-linked (GlcNAc...) asparagine; by host glycan. Disulfide bonds link cysteine 118–cysteine 207, cysteine 125–cysteine 198, cysteine 130–cysteine 155, cysteine 220–cysteine 249, and cysteine 230–cysteine 241. A V1 region spans residues 130–154 (CTDESDEWMGNVTGKNVTEDIRMKN). Positions 155–198 (CSFNITTVVRDKTKQVHALFYRLDIVPIDNDNSTNSTNYRLINC) are V2. A V3 region spans residues 298 to 331 (CTRPYKNTRQSTPIGLGQALYTTRGRTKIIGQAH). A disulfide bridge links cysteine 298 with cysteine 332. 3 N-linked (GlcNAc...) asparagine; by host glycosylation sites follow: asparagine 333, asparagine 340, and asparagine 355. The interval 364-374 (SSGGDAEITTH) is CD4-binding loop. 2 disulfide bridges follow: cysteine 378–cysteine 444 and cysteine 385–cysteine 417. The tract at residues 385–417 (CNTSGLFNSTWNINNSEGANSTESDNKLITLQC) is V4. N-linked (GlcNAc...) asparagine; by host glycosylation is found at asparagine 386, asparagine 392, asparagine 398, asparagine 404, asparagine 443, asparagine 447, asparagine 460, asparagine 461, and asparagine 464. V5 regions lie at residues 459 to 470 (TNNSSNETFRPG) and 462 to 470 (SSNETFRPG). The tract at residues 511–531 (AIGLGAMFLGFLGAAGSTMGA) is fusion peptide. Residues 573–591 (KQLQARILAVERYLKDQQL) form an immunosuppression region. A disulfide bridge links cysteine 597 with cysteine 603. Residues asparagine 610, asparagine 615, asparagine 624, asparagine 636, and asparagine 673 are each glycosylated (N-linked (GlcNAc...) asparagine; by host). Residues 632–666 (REIDNYTGLIYRLIEESQTQQEKNEQELLELDKWA) are a coiled coil. The tract at residues 661–682 (ELDKWASLWNWFNITQWLWYIK) is MPER; binding to GalCer. Residues 684 to 704 (FIMIVGGLIGLRIVFAVLSLV) traverse the membrane as a helical segment. Residues 705–855 (NRVRQGYSPL…IRQGLERLLL (151 aa)) are Cytoplasmic-facing. The YXXL motif; contains endocytosis signal signature appears at 711-714 (YSPL). The S-palmitoyl cysteine; by host moiety is linked to residue cysteine 763. The Di-leucine internalization motif motif lies at 854–855 (LL).

This sequence belongs to the HIV-1 env protein family. As to quaternary structure, the mature envelope protein (Env) consists of a homotrimer of non-covalently associated gp120-gp41 heterodimers. The resulting complex protrudes from the virus surface as a spike. There seems to be as few as 10 spikes on the average virion. Interacts with host CD4, CCR5 and CXCR4. Gp120 also interacts with the C-type lectins CD209/DC-SIGN and CLEC4M/DC-SIGNR (collectively referred to as DC-SIGN(R)). Gp120 and gp41 interact with GalCer. Gp120 interacts with host ITGA4/ITGB7 complex; on CD4+ T-cells, this interaction results in rapid activation of integrin ITGAL/LFA-1, which facilitates efficient cell-to-cell spreading of HIV-1. Gp120 interacts with cell-associated heparan sulfate; this interaction increases virus infectivity on permissive cells and may be involved in infection of CD4- cells. In terms of assembly, the mature envelope protein (Env) consists of a homotrimer of non-covalently associated gp120-gp41 heterodimers. The resulting complex protrudes from the virus surface as a spike. There seems to be as few as 10 spikes on the average virion. Post-translationally, highly glycosylated by host. The high number of glycan on the protein is reffered to as 'glycan shield' because it contributes to hide protein sequence from adaptive immune system. In terms of processing, palmitoylation of the transmembrane protein and of Env polyprotein (prior to its proteolytic cleavage) is essential for their association with host cell membrane lipid rafts. Palmitoylation is therefore required for envelope trafficking to classical lipid rafts, but not for viral replication. Specific enzymatic cleavages in vivo yield mature proteins. Envelope glycoproteins are synthesized as an inactive precursor that is heavily N-glycosylated and processed likely by host cell furin in the Golgi to yield the mature SU and TM proteins. The cleavage site between SU and TM requires the minimal sequence [KR]-X-[KR]-R. About 2 of the 9 disulfide bonds of gp41 are reduced by P4HB/PDI, following binding to CD4 receptor.

The protein resides in the virion membrane. It localises to the host cell membrane. It is found in the host endosome membrane. Its function is as follows. Oligomerizes in the host endoplasmic reticulum into predominantly trimers. In a second time, gp160 transits in the host Golgi, where glycosylation is completed. The precursor is then proteolytically cleaved in the trans-Golgi and thereby activated by cellular furin or furin-like proteases to produce gp120 and gp41. In terms of biological role, attaches the virus to the host lymphoid cell by binding to the primary receptor CD4. This interaction induces a structural rearrangement creating a high affinity binding site for a chemokine coreceptor like CXCR4 and/or CCR5. Acts as a ligand for CD209/DC-SIGN and CLEC4M/DC-SIGNR, which are respectively found on dendritic cells (DCs), and on endothelial cells of liver sinusoids and lymph node sinuses. These interactions allow capture of viral particles at mucosal surfaces by these cells and subsequent transmission to permissive cells. HIV subverts the migration properties of dendritic cells to gain access to CD4+ T-cells in lymph nodes. Virus transmission to permissive T-cells occurs either in trans (without DCs infection, through viral capture and transmission), or in cis (following DCs productive infection, through the usual CD4-gp120 interaction), thereby inducing a robust infection. In trans infection, bound virions remain infectious over days and it is proposed that they are not degraded, but protected in non-lysosomal acidic organelles within the DCs close to the cell membrane thus contributing to the viral infectious potential during DCs' migration from the periphery to the lymphoid tissues. On arrival at lymphoid tissues, intact virions recycle back to DCs' cell surface allowing virus transmission to CD4+ T-cells. Acts as a class I viral fusion protein. Under the current model, the protein has at least 3 conformational states: pre-fusion native state, pre-hairpin intermediate state, and post-fusion hairpin state. During fusion of viral and target intracellular membranes, the coiled coil regions (heptad repeats) assume a trimer-of-hairpins structure, positioning the fusion peptide in close proximity to the C-terminal region of the ectodomain. The formation of this structure appears to drive apposition and subsequent fusion of viral and target cell membranes. Complete fusion occurs in host cell endosomes and is dynamin-dependent, however some lipid transfer might occur at the plasma membrane. The virus undergoes clathrin-dependent internalization long before endosomal fusion, thus minimizing the surface exposure of conserved viral epitopes during fusion and reducing the efficacy of inhibitors targeting these epitopes. Membranes fusion leads to delivery of the nucleocapsid into the cytoplasm. This Homo sapiens (Human) protein is Envelope glycoprotein gp160.